A 124-amino-acid polypeptide reads, in one-letter code: Ribonuclease pancreatic (124 aa).

Basic and acidic residues predominate over residues 1-13 (KESAAAKFERQHM). Positions 1 to 24 (KESAAAKFERQHMDSSTSSASSSN) are disordered. 2 residues coordinate substrate: lysine 7 and arginine 10. Histidine 12 serves as the catalytic Proton acceptor. 4 disulfides stabilise this stretch: cysteine 26-cysteine 84, cysteine 40-cysteine 95, cysteine 58-cysteine 110, and cysteine 65-cysteine 72. A glycan (N-linked (GlcNAc...) asparagine; partial) is linked at asparagine 34. Residues 41–45 (KPVNT), lysine 66, and arginine 85 each bind substrate. Residue histidine 119 is the Proton donor of the active site.

This sequence belongs to the pancreatic ribonuclease family. Monomer. Interacts with and forms tight 1:1 complexes with RNH1. Dimerization of two such complexes may occur. Interaction with RNH1 inhibits this protein. Pancreas.

It localises to the secreted. It catalyses the reaction an [RNA] containing cytidine + H2O = an [RNA]-3'-cytidine-3'-phosphate + a 5'-hydroxy-ribonucleotide-3'-[RNA].. It carries out the reaction an [RNA] containing uridine + H2O = an [RNA]-3'-uridine-3'-phosphate + a 5'-hydroxy-ribonucleotide-3'-[RNA].. Its function is as follows. Endonuclease that catalyzes the cleavage of RNA on the 3' side of pyrimidine nucleotides. Acts on single-stranded and double-stranded RNA. The sequence is that of Ribonuclease pancreatic (RNASE1) from Ovis aries (Sheep).